The chain runs to 351 residues: Spermidine/putrescine import ATP-binding protein PotA (351 aa).

The ABC transporter domain occupies 6–236 (LELRNVTKEY…PENAWVANFI (231 aa)). 38-45 (GPSGCGKT) is a binding site for ATP.

The protein belongs to the ABC transporter superfamily. Spermidine/putrescine importer (TC 3.A.1.11.1) family. As to quaternary structure, the complex is composed of two ATP-binding proteins (PotA), two transmembrane proteins (PotB and PotC) and a solute-binding protein (PotD).

The protein localises to the cell membrane. It carries out the reaction ATP + H2O + polyamine-[polyamine-binding protein]Side 1 = ADP + phosphate + polyamineSide 2 + [polyamine-binding protein]Side 1.. Its function is as follows. Part of the ABC transporter complex PotABCD involved in spermidine/putrescine import. Responsible for energy coupling to the transport system. This Mycoplasma capricolum subsp. capricolum (strain California kid / ATCC 27343 / NCTC 10154) protein is Spermidine/putrescine import ATP-binding protein PotA.